A 309-amino-acid chain; its full sequence is Putative lipid kinase YtlR (309 aa).

The DAGKc domain maps to Met-1–Gln-134. ATP is bound by residues Asn-9 to Gly-13, Thr-40, and Gly-69 to Glu-75. Asn-229, Glu-232, and Thr-234 together coordinate Mg(2+). The Proton acceptor role is filled by Glu-289.

Belongs to the diacylglycerol/lipid kinase family. The cofactor is Mg(2+).

Functionally, may catalyze the ATP-dependent phosphorylation of lipids other than diacylglycerol (DAG). In fact, is not able to exhibit diacylglycerol kinase activity in vitro. This chain is Putative lipid kinase YtlR (ytlR), found in Bacillus subtilis (strain 168).